The following is a 452-amino-acid chain: UDP-N-acetylmuramate--L-alanine ligase (452 aa).

110–116 (GTHGKTT) is an ATP binding site.

Belongs to the MurCDEF family.

It is found in the cytoplasm. The enzyme catalyses UDP-N-acetyl-alpha-D-muramate + L-alanine + ATP = UDP-N-acetyl-alpha-D-muramoyl-L-alanine + ADP + phosphate + H(+). It functions in the pathway cell wall biogenesis; peptidoglycan biosynthesis. In terms of biological role, cell wall formation. The chain is UDP-N-acetylmuramate--L-alanine ligase from Francisella philomiragia subsp. philomiragia (strain ATCC 25017 / CCUG 19701 / FSC 153 / O#319-036).